The following is a 553-amino-acid chain: Urocanate hydratase (553 aa).

NAD(+) contacts are provided by residues 45–46, Gln123, 169–171, Asp189, Arg194, 235–236, 256–260, 266–267, Tyr315, and Gly485; these read GG, GMG, NA, QTSAH, and YV.

This sequence belongs to the urocanase family. NAD(+) is required as a cofactor.

The protein localises to the cytoplasm. It carries out the reaction 4-imidazolone-5-propanoate = trans-urocanate + H2O. The protein operates within amino-acid degradation; L-histidine degradation into L-glutamate; N-formimidoyl-L-glutamate from L-histidine: step 2/3. Catalyzes the conversion of urocanate to 4-imidazolone-5-propionate. This chain is Urocanate hydratase, found in Staphylococcus aureus (strain Mu50 / ATCC 700699).